A 376-amino-acid chain; its full sequence is uncharacterized protein (376 aa).

A helical transmembrane segment spans residues 19 to 39; the sequence is FVLISLILLLNLGLLLGIQIY.

This sequence to S.pombe SpAC5H10.12c.

The protein localises to the cytoplasm. It localises to the nucleus. Its subcellular location is the membrane. This is an uncharacterized protein from Schizosaccharomyces pombe (strain 972 / ATCC 24843) (Fission yeast).